The primary structure comprises 757 residues: Polyribonucleotide nucleotidyltransferase (757 aa).

Mg(2+) is bound by residues aspartate 482 and aspartate 488. Positions 549-608 constitute a KH domain; that stretch reads PRMLSFYIDKDKISAAIGSKGKNIRSVCERSNAKIEIGDDGKVSVFATSGTEAEIAKSMM. The S1 motif domain occupies 618 to 686; sequence GSIVDVKVVR…KGGCPKLSRR (69 aa). Residues 698 to 757 form a disordered region; sequence GELYNEERKDGPNDRDNYYNNSFSRKPGGSHHKRPPRPHSGFSNRNRPKFGNNDSSSGFY. Residues 702-714 show a composition bias toward basic and acidic residues; it reads NEERKDGPNDRDN. Over residues 725–734 the composition is skewed to basic residues; it reads GGSHHKRPPR.

Belongs to the polyribonucleotide nucleotidyltransferase family. Mg(2+) is required as a cofactor.

The protein localises to the cytoplasm. The catalysed reaction is RNA(n+1) + phosphate = RNA(n) + a ribonucleoside 5'-diphosphate. In terms of biological role, involved in mRNA degradation. Catalyzes the phosphorolysis of single-stranded polyribonucleotides processively in the 3'- to 5'-direction. This chain is Polyribonucleotide nucleotidyltransferase, found in Wolbachia pipientis wMel.